We begin with the raw amino-acid sequence, 323 residues long: Movement protein (323 aa).

A coiled-coil region spans residues 292–322 (SLLENKDENLLRSMSTKIDTLGKKLSLIYDN).

This sequence belongs to the caulimoviridae movement protein family. In terms of assembly, homotrimer, through the coiled-coil domain. Interacts with VAP.

It is found in the host cell junction. The protein localises to the host plasmodesma. Transports viral genome to neighboring plant cells directly through plasmosdesmata, without any budding. The movement protein allows efficient cell to cell propagation, by bypassing the host cell wall barrier. Acts by forming tubules structures that increase the size exclusion limit (SEL) of plasmodesmata, thereby allowing viral ribonucleocapsids to spread directly to neighboring cells. The sequence is that of Movement protein from Figwort mosaic virus (strain DxS) (FMV).